The following is a 1390-amino-acid chain: DNA-directed RNA polymerase subunit beta'' (1390 aa).

Zn(2+)-binding residues include C220, C291, C298, and C301.

Belongs to the RNA polymerase beta' chain family. RpoC2 subfamily. In plastids the minimal PEP RNA polymerase catalytic core is composed of four subunits: alpha, beta, beta', and beta''. When a (nuclear-encoded) sigma factor is associated with the core the holoenzyme is formed, which can initiate transcription. Zn(2+) serves as cofactor.

The protein localises to the plastid. It is found in the chloroplast. It catalyses the reaction RNA(n) + a ribonucleoside 5'-triphosphate = RNA(n+1) + diphosphate. Functionally, DNA-dependent RNA polymerase catalyzes the transcription of DNA into RNA using the four ribonucleoside triphosphates as substrates. This Populus alba (White poplar) protein is DNA-directed RNA polymerase subunit beta''.